Reading from the N-terminus, the 355-residue chain is Ion-translocating oxidoreductase complex subunit D (355 aa).

5 helical membrane passes run 13–33, 35–55, 77–97, 98–118, and 128–148; these read GKLT…ALAV, VYYF…LALI, VILT…YWVI, LIGT…LGQN, and VVLL…ISLL. Residue threonine 186 is modified to FMN phosphoryl threonine. A run of 5 helical transmembrane segments spans residues 216–236, 245–265, 267–287, 294–314, and 318–338; these read AGLG…FLIW, PVAI…FGNA, AVGF…FFIA, PVTP…ICLI, and GNYP…VPLI.

The protein belongs to the NqrB/RnfD family. The complex is composed of six subunits: RnfA, RnfB, RnfC, RnfD, RnfE and RnfG. The cofactor is FMN.

Its subcellular location is the cell inner membrane. Part of a membrane-bound complex that couples electron transfer with translocation of ions across the membrane. This chain is Ion-translocating oxidoreductase complex subunit D, found in Actinobacillus succinogenes (strain ATCC 55618 / DSM 22257 / CCUG 43843 / 130Z).